The following is a 418-amino-acid chain: Glutamyl-tRNA reductase (418 aa).

Substrate-binding positions include 49–52 (TCNR), Ser-109, 114–116 (EPQ), and Gln-120. Catalysis depends on Cys-50, which acts as the Nucleophile. 189–194 (GAGETI) contacts NADP(+).

It belongs to the glutamyl-tRNA reductase family. Homodimer.

The catalysed reaction is (S)-4-amino-5-oxopentanoate + tRNA(Glu) + NADP(+) = L-glutamyl-tRNA(Glu) + NADPH + H(+). The protein operates within porphyrin-containing compound metabolism; protoporphyrin-IX biosynthesis; 5-aminolevulinate from L-glutamyl-tRNA(Glu): step 1/2. Functionally, catalyzes the NADPH-dependent reduction of glutamyl-tRNA(Glu) to glutamate 1-semialdehyde (GSA). This chain is Glutamyl-tRNA reductase, found in Escherichia coli O1:K1 / APEC.